The sequence spans 897 residues: Interleukin enhancer-binding factor 3-A (897 aa).

In terms of domain architecture, DZF spans 5–379 (RIFLNDDRHV…PLKRPIEEDG (375 aa)). Disordered regions lie at residues 52 to 85 (QEKD…GENP), 364 to 403 (TTYA…PPQV), and 466 to 502 (MGLP…EVDS). 2 stretches are compositionally biased toward basic and acidic residues: residues 72–81 (EEGKDSEMKT) and 373–384 (RPIEEDGDDKSP). Residues 372-390 (KRPIEEDGDDKSPSKKKKK) carry the Bipartite nuclear localization signal motif. DRBM domains are found at residues 399–468 (EPPQ…DMGL) and 521–587 (HGKN…KLFP). Disordered regions lie at residues 627 to 650 (PPPQ…GRGG) and 708 to 797 (GDSY…AQGA). Positions 637–650 (RGGMNRGRGRGRGG) are enriched in gly residues. Pro residues predominate over residues 714–747 (PTPPKPFVNKKPPPPQQQQQQQPPPQHASNPPKP). Low complexity predominate over residues 749–794 (YNQGYQGHQGGQQQQQQQQQQQTYNQNQYSNYGPPQKQKGGYNQGA).

In terms of assembly, a component of a ybx2/frgy2-containing mRNA-ribonucleoprotein (mRNP) complex. Also a component of the CCAAT box transcription factor (CBTF) complex. In terms of processing, phosphorylated. Phosphorylation affects nuclear translocation. Methylated by protein arginine N-methyltransferase 1 (prmt1b) in the RGG-rich domain. Methylation decreases DNA-binding and thereby decreases transcription of the gata2 gene, but does not regulate dsRNA binding or subcellular localization. Expressed mainly in the ectoderm (at protein level).

It is found in the nucleus. The protein localises to the cytoplasm. Functionally, RNA-binding protein that plays an essential role in the biogenesis of circular RNAs (circRNAs) which are produced by back-splicing circularization of pre-mRNAs. Within the nucleus, promotes circRNAs processing by stabilizing the regulatory elements residing in the flanking introns of the circularized exons. Plays thereby a role in the back-splicing of a subset of circRNAs. As a consequence, participates in a wide range of transcriptional and post-transcriptional processes. Binds to poly-U elements and AU-rich elements (AREs) in the 3'-UTR of target mRNAs. Upon viral infection, ILF3 accumulates in the cytoplasm and participates in the innate antiviral response. Mechanistically, ILF3 becomes phosphorylated and activated by the double-stranded RNA-activated protein kinase/PKR which releases ILF3 from cellular mature circRNAs. In turn, unbound ILF3 molecules are able to interact with and thus inhibit viral mRNAs. Has a cytoplasmic role early in development as part of a ribonucleoprotein (mRNP) complex which may regulate mRNA transport and/or translation. Following nuclear localization at the mid-blastula transition, acts as a transcription factor and binds the 5'-CCAAT-3' promoter sequence to regulate transcription of the gata2 gene as a subunit of the CCAAT box transcription factor (CBTF). Its role as an mRNP component negatively regulates its activity as a transcription factor by precluding its nuclear localization. The protein is Interleukin enhancer-binding factor 3-A (ilf3-a) of Xenopus laevis (African clawed frog).